Consider the following 611-residue polypeptide: Dihydroxy-acid dehydratase (611 aa).

D81 contacts Mg(2+). C122 lines the [2Fe-2S] cluster pocket. D123 and K124 together coordinate Mg(2+). K124 carries the N6-carboxylysine modification. [2Fe-2S] cluster is bound at residue C195. A Mg(2+)-binding site is contributed by E491. The active-site Proton acceptor is the S517.

This sequence belongs to the IlvD/Edd family. As to quaternary structure, homodimer. [2Fe-2S] cluster serves as cofactor. Mg(2+) is required as a cofactor.

It catalyses the reaction (2R)-2,3-dihydroxy-3-methylbutanoate = 3-methyl-2-oxobutanoate + H2O. The enzyme catalyses (2R,3R)-2,3-dihydroxy-3-methylpentanoate = (S)-3-methyl-2-oxopentanoate + H2O. Its pathway is amino-acid biosynthesis; L-isoleucine biosynthesis; L-isoleucine from 2-oxobutanoate: step 3/4. The protein operates within amino-acid biosynthesis; L-valine biosynthesis; L-valine from pyruvate: step 3/4. In terms of biological role, functions in the biosynthesis of branched-chain amino acids. Catalyzes the dehydration of (2R,3R)-2,3-dihydroxy-3-methylpentanoate (2,3-dihydroxy-3-methylvalerate) into 2-oxo-3-methylpentanoate (2-oxo-3-methylvalerate) and of (2R)-2,3-dihydroxy-3-methylbutanoate (2,3-dihydroxyisovalerate) into 2-oxo-3-methylbutanoate (2-oxoisovalerate), the penultimate precursor to L-isoleucine and L-valine, respectively. The protein is Dihydroxy-acid dehydratase of Glaesserella parasuis serovar 5 (strain SH0165) (Haemophilus parasuis).